Here is a 67-residue protein sequence, read N- to C-terminus: UPF0253 protein VV2574 (67 aa).

It belongs to the UPF0253 family.

The polypeptide is UPF0253 protein VV2574 (Vibrio vulnificus (strain YJ016)).